The primary structure comprises 143 residues: NADH-quinone oxidoreductase subunit A (143 aa).

A run of 3 helical transmembrane segments spans residues 7 to 27, 63 to 83, and 93 to 113; these read GFGNVFVFLALGIVFVAGGYL, FYVVALIFIIFDVEVVFLYPW, and FALFEALVFAGILILGLAYAW.

It belongs to the complex I subunit 3 family. NDH-1 is composed of 14 different subunits. Subunits NuoA, H, J, K, L, M, N constitute the membrane sector of the complex.

The protein resides in the cell inner membrane. The catalysed reaction is a quinone + NADH + 5 H(+)(in) = a quinol + NAD(+) + 4 H(+)(out). Its function is as follows. NDH-1 shuttles electrons from NADH, via FMN and iron-sulfur (Fe-S) centers, to quinones in the respiratory chain. The immediate electron acceptor for the enzyme in this species is believed to be a menaquinone. Couples the redox reaction to proton translocation (for every two electrons transferred, four hydrogen ions are translocated across the cytoplasmic membrane), and thus conserves the redox energy in a proton gradient. In Chlorobium limicola (strain DSM 245 / NBRC 103803 / 6330), this protein is NADH-quinone oxidoreductase subunit A.